We begin with the raw amino-acid sequence, 263 residues long: 3-deoxy-manno-octulosonate cytidylyltransferase 1 (263 aa).

It belongs to the KdsB family.

It localises to the cytoplasm. The catalysed reaction is 3-deoxy-alpha-D-manno-oct-2-ulosonate + CTP = CMP-3-deoxy-beta-D-manno-octulosonate + diphosphate. It functions in the pathway nucleotide-sugar biosynthesis; CMP-3-deoxy-D-manno-octulosonate biosynthesis; CMP-3-deoxy-D-manno-octulosonate from 3-deoxy-D-manno-octulosonate and CTP: step 1/1. Its pathway is bacterial outer membrane biogenesis; lipopolysaccharide biosynthesis. Activates KDO (a required 8-carbon sugar) for incorporation into bacterial lipopolysaccharide in Gram-negative bacteria. The polypeptide is 3-deoxy-manno-octulosonate cytidylyltransferase 1 (Burkholderia ambifaria (strain MC40-6)).